Consider the following 363-residue polypeptide: UDP-N-acetylglucosamine--N-acetylmuramyl-(pentapeptide) pyrophosphoryl-undecaprenol N-acetylglucosamine transferase (363 aa).

UDP-N-acetyl-alpha-D-glucosamine is bound by residues 10 to 12 (TGG), Asn-124, Ser-195, Ile-250, and Gln-295.

Belongs to the glycosyltransferase 28 family. MurG subfamily.

It is found in the cell membrane. It carries out the reaction Mur2Ac(oyl-L-Ala-gamma-D-Glu-L-Lys-D-Ala-D-Ala)-di-trans,octa-cis-undecaprenyl diphosphate + UDP-N-acetyl-alpha-D-glucosamine = beta-D-GlcNAc-(1-&gt;4)-Mur2Ac(oyl-L-Ala-gamma-D-Glu-L-Lys-D-Ala-D-Ala)-di-trans,octa-cis-undecaprenyl diphosphate + UDP + H(+). Its pathway is cell wall biogenesis; peptidoglycan biosynthesis. Cell wall formation. Catalyzes the transfer of a GlcNAc subunit on undecaprenyl-pyrophosphoryl-MurNAc-pentapeptide (lipid intermediate I) to form undecaprenyl-pyrophosphoryl-MurNAc-(pentapeptide)GlcNAc (lipid intermediate II). This chain is UDP-N-acetylglucosamine--N-acetylmuramyl-(pentapeptide) pyrophosphoryl-undecaprenol N-acetylglucosamine transferase, found in Lactiplantibacillus plantarum (strain ATCC BAA-793 / NCIMB 8826 / WCFS1) (Lactobacillus plantarum).